The following is a 686-amino-acid chain: X-linked interleukin-1 receptor accessory protein-like 2 (686 aa).

Residues 1–16 (MKLPLLLALVVCSAVS) form the signal peptide. Residues 17-354 (TNLKMVSKRN…LLRKKDLIYK (338 aa)) are Extracellular-facing. Residues 32–132 (IDWSVDLKTY…YCMKVSMSLT (101 aa)) form the Ig-like C2-type 1 domain. Residues C53 and C116 are joined by a disulfide bond. N-linked (GlcNAc...) asparagine glycans are attached at residues N63, N120, N136, N211, and N328. Ig-like C2-type domains are found at residues 141–232 (CYNS…LKVT) and 239–347 (PPKP…VLLR). 2 disulfide bridges follow: C162–C214 and C265–C331. A helical membrane pass occupies residues 355-375 (IELAGGLGAIFLLLILLLVVY). Residues 376–686 (KCYNIELMLF…KELSFTSDIW (311 aa)) are Cytoplasmic-facing. A TIR domain is found at 400–556 (KEYDAYLSYT…KFWKHLVYEM (157 aa)). The active site involves E488.

The protein belongs to the interleukin-1 receptor family. As to expression, detected in fetal brain after day 12.5, in particular in parts of the diencephalon and in the basal plate of the spinal cord. In postnatal brain detected in cerebral cortex, olfactory bulb, in the CA1 region of the hippocampus and in Purkinje cells of the Xth cerebellar lobule.

The protein localises to the membrane. It catalyses the reaction NAD(+) + H2O = ADP-D-ribose + nicotinamide + H(+). The polypeptide is X-linked interleukin-1 receptor accessory protein-like 2 (Il1rapl2) (Mus musculus (Mouse)).